Reading from the N-terminus, the 458-residue chain is Argininosuccinate lyase (458 aa).

This sequence belongs to the lyase 1 family. Argininosuccinate lyase subfamily.

It is found in the cytoplasm. It catalyses the reaction 2-(N(omega)-L-arginino)succinate = fumarate + L-arginine. The protein operates within amino-acid biosynthesis; L-arginine biosynthesis; L-arginine from L-ornithine and carbamoyl phosphate: step 3/3. This is Argininosuccinate lyase from Trichlorobacter lovleyi (strain ATCC BAA-1151 / DSM 17278 / SZ) (Geobacter lovleyi).